We begin with the raw amino-acid sequence, 455 residues long: Glutamyl-tRNA reductase (455 aa).

Substrate-binding positions include 49–52 (TCNR), Ser-109, 114–116 (ETQ), and Gln-120. Cys-50 serves as the catalytic Nucleophile. 189–194 (GAGKMG) lines the NADP(+) pocket.

It belongs to the glutamyl-tRNA reductase family. Homodimer.

It catalyses the reaction (S)-4-amino-5-oxopentanoate + tRNA(Glu) + NADP(+) = L-glutamyl-tRNA(Glu) + NADPH + H(+). Its pathway is porphyrin-containing compound metabolism; protoporphyrin-IX biosynthesis; 5-aminolevulinate from L-glutamyl-tRNA(Glu): step 1/2. Functionally, catalyzes the NADPH-dependent reduction of glutamyl-tRNA(Glu) to glutamate 1-semialdehyde (GSA). The protein is Glutamyl-tRNA reductase of Bacillus velezensis (strain DSM 23117 / BGSC 10A6 / LMG 26770 / FZB42) (Bacillus amyloliquefaciens subsp. plantarum).